A 131-amino-acid chain; its full sequence is Small ribosomal subunit protein uS8 (131 aa).

Belongs to the universal ribosomal protein uS8 family. In terms of assembly, part of the 30S ribosomal subunit. Contacts proteins S5 and S12.

One of the primary rRNA binding proteins, it binds directly to 16S rRNA central domain where it helps coordinate assembly of the platform of the 30S subunit. The chain is Small ribosomal subunit protein uS8 from Malacoplasma penetrans (strain HF-2) (Mycoplasma penetrans).